We begin with the raw amino-acid sequence, 617 residues long: Leucine aminopeptidase 2 (617 aa).

A peptide contacts are provided by residues 139 to 141 (QCQ) and 271 to 276 (PYGGME). H300 is a Zn(2+) binding site. Catalysis depends on E301, which acts as the Proton acceptor. Zn(2+)-binding residues include H304 and E323. Y388 acts as the Proton donor in catalysis.

It belongs to the peptidase M1 family. Requires Zn(2+) as cofactor.

The protein resides in the cytoplasm. Its subcellular location is the nucleus. The catalysed reaction is an epoxide + H2O = an ethanediol. In terms of biological role, aminopeptidase that preferentially cleaves di- and tripeptides. Also has low epoxide hydrolase activity (in vitro). Can hydrolyze the epoxide leukotriene LTA(4) but it forms preferentially 5,6-dihydroxy-7,9,11,14-eicosatetraenoic acid rather than the cytokine leukotriene B(4) as the product compared to the homologous mammalian enzyme (in vitro). This chain is Leucine aminopeptidase 2, found in Aspergillus terreus (strain NIH 2624 / FGSC A1156).